The chain runs to 88 residues: Sec-independent protein translocase protein TatA (88 aa).

A helical membrane pass occupies residues 3–23; it reads IFGVGLPEVTVILILALLIFG. Positions 56-88 are disordered; the sequence is MNEQDKDESPISIESNQTNEINQEKIDSENSKK. The span at 67–76 shows a compositional bias: polar residues; it reads SIESNQTNEI. Basic and acidic residues predominate over residues 77 to 88; it reads NQEKIDSENSKK.

Belongs to the TatA/E family. As to quaternary structure, forms a complex with TatC.

Its subcellular location is the cell inner membrane. Its function is as follows. Part of the twin-arginine translocation (Tat) system that transports large folded proteins containing a characteristic twin-arginine motif in their signal peptide across membranes. TatA could form the protein-conducting channel of the Tat system. The sequence is that of Sec-independent protein translocase protein TatA from Prochlorococcus marinus (strain AS9601).